Reading from the N-terminus, the 97-residue chain is Large ribosomal subunit protein bL28 (97 aa).

Belongs to the bacterial ribosomal protein bL28 family.

In Bartonella quintana (strain Toulouse) (Rochalimaea quintana), this protein is Large ribosomal subunit protein bL28.